The chain runs to 264 residues: MKAYLDLMRHVLDNGTDKSDRTGTGTRSVFGYQMRFDLGKGFPLLTTKKLHLRSIIHELLWFLKGDTNIKYLKDNNVSIWDEWADENGDLGPVYGYQWRNWPAPDGRHIDQIANVLEQIKKNPDSRRLIVSAWNPALVDEMALPPCHALFQFYVADGKLSCQLYQRSADIFLGVPFNIASYALLTMMMAQVCGLEAGEFVHTFGDAHLYRNHFEQAALQLEREPRALPVMKINPEVKDLFAFKFEDFELEGYDPHPHIKAAVSV.

Position 21 (Arg21) interacts with dUMP. His51 is a (6R)-5,10-methylene-5,6,7,8-tetrahydrofolate binding site. Position 126–127 (126–127 (RR)) interacts with dUMP. Cys146 serves as the catalytic Nucleophile. DUMP-binding positions include 166 to 169 (RSAD), Asn177, and 207 to 209 (HLY). (6R)-5,10-methylene-5,6,7,8-tetrahydrofolate is bound at residue Asp169. Residue Ser263 coordinates (6R)-5,10-methylene-5,6,7,8-tetrahydrofolate.

The protein belongs to the thymidylate synthase family. Bacterial-type ThyA subfamily. Homodimer.

The protein localises to the cytoplasm. It catalyses the reaction dUMP + (6R)-5,10-methylene-5,6,7,8-tetrahydrofolate = 7,8-dihydrofolate + dTMP. It functions in the pathway pyrimidine metabolism; dTTP biosynthesis. Functionally, catalyzes the reductive methylation of 2'-deoxyuridine-5'-monophosphate (dUMP) to 2'-deoxythymidine-5'-monophosphate (dTMP) while utilizing 5,10-methylenetetrahydrofolate (mTHF) as the methyl donor and reductant in the reaction, yielding dihydrofolate (DHF) as a by-product. This enzymatic reaction provides an intracellular de novo source of dTMP, an essential precursor for DNA biosynthesis. The sequence is that of Thymidylate synthase from Neisseria meningitidis serogroup A / serotype 4A (strain DSM 15465 / Z2491).